A 423-amino-acid chain; its full sequence is Serine--tRNA ligase (423 aa).

An L-serine-binding site is contributed by 231 to 233 (TGE). ATP is bound at residue 262–264 (RSE). Residue glutamate 285 coordinates L-serine. 349–352 (EISS) is an ATP binding site. Serine 385 is an L-serine binding site.

Belongs to the class-II aminoacyl-tRNA synthetase family. Type-1 seryl-tRNA synthetase subfamily. As to quaternary structure, homodimer. The tRNA molecule binds across the dimer.

It is found in the cytoplasm. The catalysed reaction is tRNA(Ser) + L-serine + ATP = L-seryl-tRNA(Ser) + AMP + diphosphate + H(+). The enzyme catalyses tRNA(Sec) + L-serine + ATP = L-seryl-tRNA(Sec) + AMP + diphosphate + H(+). It functions in the pathway aminoacyl-tRNA biosynthesis; selenocysteinyl-tRNA(Sec) biosynthesis; L-seryl-tRNA(Sec) from L-serine and tRNA(Sec): step 1/1. Catalyzes the attachment of serine to tRNA(Ser). Is also able to aminoacylate tRNA(Sec) with serine, to form the misacylated tRNA L-seryl-tRNA(Sec), which will be further converted into selenocysteinyl-tRNA(Sec). This is Serine--tRNA ligase from Coxiella burnetii (strain CbuK_Q154) (Coxiella burnetii (strain Q154)).